Consider the following 299-residue polypeptide: Formylglycine-generating enzyme (299 aa).

Residues C263 and C268 each coordinate Cu cation.

It belongs to the sulfatase-modifying factor family. Cu cation serves as cofactor.

The catalysed reaction is L-cysteinyl-[sulfatase] + 2 a thiol + O2 = an organic disulfide + 3-oxo-L-alanyl-[sulfatase] + hydrogen sulfide + H2O + H(+). Its pathway is protein modification; sulfatase oxidation. In terms of biological role, oxidase that catalyzes the conversion of cysteine to 3-oxoalanine on target proteins. 3-oxoalanine modification, which is also named formylglycine (fGly), occurs in the maturation of arylsulfatases and some alkaline phosphatases that use the hydrated form of 3-oxoalanine as a catalytic nucleophile. The sequence is that of Formylglycine-generating enzyme from Mycobacterium tuberculosis (strain ATCC 25618 / H37Rv).